A 101-amino-acid polypeptide reads, in one-letter code: Urease subunit beta (101 aa).

It belongs to the urease beta subunit family. Heterotrimer of UreA (gamma), UreB (beta) and UreC (alpha) subunits. Three heterotrimers associate to form the active enzyme.

The protein resides in the cytoplasm. The enzyme catalyses urea + 2 H2O + H(+) = hydrogencarbonate + 2 NH4(+). Its pathway is nitrogen metabolism; urea degradation; CO(2) and NH(3) from urea (urease route): step 1/1. The chain is Urease subunit beta from Azotobacter vinelandii (strain DJ / ATCC BAA-1303).